The chain runs to 91 residues: Small ribosomal subunit protein bS20 (91 aa).

Belongs to the bacterial ribosomal protein bS20 family.

Functionally, binds directly to 16S ribosomal RNA. This Acidithiobacillus ferrooxidans (strain ATCC 23270 / DSM 14882 / CIP 104768 / NCIMB 8455) (Ferrobacillus ferrooxidans (strain ATCC 23270)) protein is Small ribosomal subunit protein bS20.